The sequence spans 353 residues: Photosystem II D2 protein (353 aa).

Threonine 2 carries the post-translational modification N-acetylthreonine. Threonine 2 carries the phosphothreonine modification. The helical transmembrane segment at 41-61 (CAYFALGGWFTGTTFVTSWYT) threads the bilayer. Residue histidine 118 participates in chlorophyll a binding. The helical transmembrane segment at 125–141 (GFMLRQFELARSVQLRP) threads the bilayer. The pheophytin a site is built by glutamine 130 and asparagine 143. A helical transmembrane segment spans residues 153–166 (VFVSVFLIYPLGQS). Histidine 198 is a binding site for chlorophyll a. Residues 208 to 228 (AALLCAIHGATVENTLFEDGD) traverse the membrane as a helical segment. 2 residues coordinate a plastoquinone: histidine 215 and phenylalanine 262. Histidine 215 is a binding site for Fe cation. Histidine 269 contributes to the Fe cation binding site. The helical transmembrane segment at 279-295 (GLWMSAIGVVGLALNLR) threads the bilayer.

It belongs to the reaction center PufL/M/PsbA/D family. PSII is composed of 1 copy each of membrane proteins PsbA, PsbB, PsbC, PsbD, PsbE, PsbF, PsbH, PsbI, PsbJ, PsbK, PsbL, PsbM, PsbT, PsbX, PsbY, PsbZ, Psb30/Ycf12, at least 3 peripheral proteins of the oxygen-evolving complex and a large number of cofactors. It forms dimeric complexes. The D1/D2 heterodimer binds P680, chlorophylls that are the primary electron donor of PSII, and subsequent electron acceptors. It shares a non-heme iron and each subunit binds pheophytin, quinone, additional chlorophylls, carotenoids and lipids. There is also a Cl(-1) ion associated with D1 and D2, which is required for oxygen evolution. The PSII complex binds additional chlorophylls, carotenoids and specific lipids. serves as cofactor.

It localises to the plastid. It is found in the chloroplast thylakoid membrane. It catalyses the reaction 2 a plastoquinone + 4 hnu + 2 H2O = 2 a plastoquinol + O2. Functionally, photosystem II (PSII) is a light-driven water:plastoquinone oxidoreductase that uses light energy to abstract electrons from H(2)O, generating O(2) and a proton gradient subsequently used for ATP formation. It consists of a core antenna complex that captures photons, and an electron transfer chain that converts photonic excitation into a charge separation. The D1/D2 (PsbA/PsbD) reaction center heterodimer binds P680, the primary electron donor of PSII as well as several subsequent electron acceptors. D2 is needed for assembly of a stable PSII complex. This chain is Photosystem II D2 protein, found in Cycas taitungensis (Prince sago).